We begin with the raw amino-acid sequence, 382 residues long: Homoserine O-acetyltransferase (382 aa).

The AB hydrolase-1 domain occupies asparagine 52–glutamate 356. Serine 157 acts as the Nucleophile in catalysis. Substrate is bound at residue arginine 227. Active-site residues include aspartate 320 and histidine 350. Aspartate 351 provides a ligand contact to substrate.

It belongs to the AB hydrolase superfamily. MetX family. As to quaternary structure, homodimer.

The protein resides in the cytoplasm. The enzyme catalyses L-homoserine + acetyl-CoA = O-acetyl-L-homoserine + CoA. The protein operates within amino-acid biosynthesis; L-methionine biosynthesis via de novo pathway; O-acetyl-L-homoserine from L-homoserine: step 1/1. Transfers an acetyl group from acetyl-CoA to L-homoserine, forming acetyl-L-homoserine. The sequence is that of Homoserine O-acetyltransferase from Mycobacterium leprae (strain TN).